A 162-amino-acid chain; its full sequence is MNPRRKKRLALVVGLIGGVAAVASLLLYALNTNLNLFYTPTEIAHGKADTGIKPEVGQRIRVGGMVTVGSMIRDPNSLHVEFAVHDAGGGEVIVTYDDLLPDLFREGQGIVAQGVLTEDGKLQASEVLAKHDENYMPPEVAEAMGKNHEKLEYTETQKGGSR.

Residues 1-8 are Cytoplasmic-facing; that stretch reads MNPRRKKR. The chain crosses the membrane as a helical; Signal-anchor for type II membrane protein span at residues 9-29; it reads LALVVGLIGGVAAVASLLLYA. The Periplasmic portion of the chain corresponds to 30–162; that stretch reads LNTNLNLFYT…YTETQKGGSR (133 aa). Residues H131 and Y135 each contribute to the heme site.

Belongs to the CcmE/CycJ family.

It is found in the cell inner membrane. Heme chaperone required for the biogenesis of c-type cytochromes. Transiently binds heme delivered by CcmC and transfers the heme to apo-cytochromes in a process facilitated by CcmF and CcmH. In Shewanella amazonensis (strain ATCC BAA-1098 / SB2B), this protein is Cytochrome c-type biogenesis protein CcmE.